The chain runs to 107 residues: Nucleoid-associated protein BLi00029/BL02358 (107 aa).

Residues 1–27 (MRGGMGNMQKMMKQMQKMQKDMQKAQE) form a disordered region. Positions 8–17 (MQKMMKQMQK) are enriched in low complexity. The span at 18 to 27 (MQKDMQKAQE) shows a compositional bias: basic and acidic residues.

Belongs to the YbaB/EbfC family. As to quaternary structure, homodimer.

It is found in the cytoplasm. It localises to the nucleoid. Its function is as follows. Binds to DNA and alters its conformation. May be involved in regulation of gene expression, nucleoid organization and DNA protection. The protein is Nucleoid-associated protein BLi00029/BL02358 of Bacillus licheniformis (strain ATCC 14580 / DSM 13 / JCM 2505 / CCUG 7422 / NBRC 12200 / NCIMB 9375 / NCTC 10341 / NRRL NRS-1264 / Gibson 46).